A 176-amino-acid polypeptide reads, in one-letter code: ATP-dependent protease subunit HslV (176 aa).

Residue T6 is part of the active site. Residues S161, C164, and T167 each coordinate Na(+).

It belongs to the peptidase T1B family. HslV subfamily. A double ring-shaped homohexamer of HslV is capped on each side by a ring-shaped HslU homohexamer. The assembly of the HslU/HslV complex is dependent on binding of ATP.

Its subcellular location is the cytoplasm. It carries out the reaction ATP-dependent cleavage of peptide bonds with broad specificity.. Its activity is regulated as follows. Allosterically activated by HslU binding. In terms of biological role, protease subunit of a proteasome-like degradation complex believed to be a general protein degrading machinery. The protein is ATP-dependent protease subunit HslV of Aquifex aeolicus (strain VF5).